Reading from the N-terminus, the 768-residue chain is Actin filament-associated protein 1-like 1 (768 aa).

The segment at 83–145 is disordered; that stretch reads LRDMSDDGEP…GKSPEYISSH (63 aa). 5 positions are modified to phosphoserine: Ser87, Ser93, Ser97, Ser103, and Ser153. The span at 165 to 185 shows a compositional bias: polar residues; it reads SYPTTRMNGELKNSYNDSDAM. Residues 165–211 are disordered; that stretch reads SYPTTRMNGELKNSYNDSDAMSSSYESYDEEEEEEKGRQPKHQWPSE. The region spanning 220–316 is the PH 1 domain; the sequence is DCRICAFLLR…WLKVIREVSR (97 aa). 2 positions are modified to phosphoserine: Ser329 and Ser343. Over residues 340 to 349 the composition is skewed to basic and acidic residues; sequence KRLSQEKQNS. Residues 340 to 382 are disordered; that stretch reads KRLSQEKQNSDSDSLGMNDSGSTLGRREACEHGKGKKNSLAEL. Residues 350–362 show a composition bias toward polar residues; the sequence is DSDSLGMNDSGST. Residues 418 to 512 enclose the PH 2 domain; that stretch reads EVPCCGYLNV…WLGLLLVEMG (95 aa). A Phosphotyrosine modification is found at Tyr557. The segment at 564 to 609 is disordered; that stretch reads KVQDEEPQRPTGAQVKRHASSCSEKSHRADPQVKVKRHASSANQYK. Residues 587–596 are compositionally biased toward basic and acidic residues; it reads EKSHRADPQV. Residues 611 to 701 adopt a coiled-coil conformation; the sequence is GKNRAEEDAR…AVKERLQQSL (91 aa). Residues 705-768 form a disordered region; it reads PALGLSVSNK…KAKEWEMKKT (64 aa). Positions 710 to 734 are enriched in polar residues; that stretch reads SVSNKNKSQDTTNKPQSNAPEQSLP. Position 747 is a phosphoserine (Ser747). Residues 759–768 show a composition bias toward basic and acidic residues; the sequence is KAKEWEMKKT.

As to quaternary structure, interacts with CTTN.

It is found in the cytoplasm. The protein resides in the cell projection. The protein localises to the podosome. It localises to the invadopodium. Its subcellular location is the cytoskeleton. It is found in the stress fiber. In terms of biological role, may be involved in podosome and invadosome formation. The protein is Actin filament-associated protein 1-like 1 (Afap1l1) of Mus musculus (Mouse).